The primary structure comprises 499 residues: Replication factor C large subunit (499 aa).

Residue 50–57 participates in ATP binding; the sequence is GPPGVGKT. Positions 428-499 are disordered; the sequence is EAERRVEAAE…QATLFDFLKK (72 aa). Residues 436–472 are compositionally biased toward acidic residues; the sequence is AEEEETMEAGEPEEELEEVEEEELTEEELEEAEEEIE. A compositionally biased stretch (basic and acidic residues) spans 473–484; the sequence is TVGKKEKPEKEK.

The protein belongs to the activator 1 small subunits family. RfcL subfamily. In terms of assembly, heteromultimer composed of small subunits (RfcS) and large subunits (RfcL).

Its function is as follows. Part of the RFC clamp loader complex which loads the PCNA sliding clamp onto DNA. This Thermococcus kodakarensis (strain ATCC BAA-918 / JCM 12380 / KOD1) (Pyrococcus kodakaraensis (strain KOD1)) protein is Replication factor C large subunit.